A 170-amino-acid polypeptide reads, in one-letter code: Cysteine-rich venom protein VAR4 (170 aa).

Positions 1 to 22 are cleaved as a signal peptide; it reads MILLKLYLTLAAILCQSRGTTS. Positions 41-169 constitute an SCP domain; it reads NKHNDLRRTV…PLKYFLVCQY (129 aa). 3 cysteine pairs are disulfide-bonded: Cys-77–Cys-156, Cys-95–Cys-170, and Cys-151–Cys-167.

This sequence belongs to the CRISP family. In terms of processing, contains 8 disulfide bonds. In terms of tissue distribution, expressed by the venom gland.

Its subcellular location is the secreted. Its function is as follows. Blocks ryanodine receptors, and potassium channels. The polypeptide is Cysteine-rich venom protein VAR4 (Varanus acanthurus (Ridge-tailed monitor)).